Here is a 179-residue protein sequence, read N- to C-terminus: Large ribosomal subunit protein uL5 (179 aa).

It belongs to the universal ribosomal protein uL5 family. In terms of assembly, part of the 50S ribosomal subunit; part of the 5S rRNA/L5/L18/L25 subcomplex. Contacts the 5S rRNA and the P site tRNA. Forms a bridge to the 30S subunit in the 70S ribosome.

This is one of the proteins that bind and probably mediate the attachment of the 5S RNA into the large ribosomal subunit, where it forms part of the central protuberance. In the 70S ribosome it contacts protein S13 of the 30S subunit (bridge B1b), connecting the 2 subunits; this bridge is implicated in subunit movement. Contacts the P site tRNA; the 5S rRNA and some of its associated proteins might help stabilize positioning of ribosome-bound tRNAs. The chain is Large ribosomal subunit protein uL5 from Natranaerobius thermophilus (strain ATCC BAA-1301 / DSM 18059 / JW/NM-WN-LF).